Here is a 508-residue protein sequence, read N- to C-terminus: Photosystem II CP47 reaction center protein (508 aa).

The next 6 helical transmembrane spans lie at 21–36 (AVHI…WAGS), 101–115 (IVFS…IWHW), 140–156 (GIHL…FGTF), 203–218 (IAAG…FHLS), 237–252 (VLSS…AFVV), and 457–472 (SFAL…HGAR).

This sequence belongs to the PsbB/PsbC family. PsbB subfamily. As to quaternary structure, PSII is composed of 1 copy each of membrane proteins PsbA, PsbB, PsbC, PsbD, PsbE, PsbF, PsbH, PsbI, PsbJ, PsbK, PsbL, PsbM, PsbT, PsbX, PsbY, PsbZ, Psb30/Ycf12, at least 3 peripheral proteins of the oxygen-evolving complex and a large number of cofactors. It forms dimeric complexes. The cofactor is Binds multiple chlorophylls. PSII binds additional chlorophylls, carotenoids and specific lipids..

Its subcellular location is the plastid. It localises to the chloroplast thylakoid membrane. In terms of biological role, one of the components of the core complex of photosystem II (PSII). It binds chlorophyll and helps catalyze the primary light-induced photochemical processes of PSII. PSII is a light-driven water:plastoquinone oxidoreductase, using light energy to abstract electrons from H(2)O, generating O(2) and a proton gradient subsequently used for ATP formation. The protein is Photosystem II CP47 reaction center protein of Citrus sinensis (Sweet orange).